The primary structure comprises 1372 residues: DNA-directed RNA polymerase subunit beta (1372 aa).

Belongs to the RNA polymerase beta chain family. As to quaternary structure, the RNAP catalytic core consists of 2 alpha, 1 beta, 1 beta' and 1 omega subunit. When a sigma factor is associated with the core the holoenzyme is formed, which can initiate transcription.

It catalyses the reaction RNA(n) + a ribonucleoside 5'-triphosphate = RNA(n+1) + diphosphate. Functionally, DNA-dependent RNA polymerase catalyzes the transcription of DNA into RNA using the four ribonucleoside triphosphates as substrates. This Bradyrhizobium diazoefficiens (strain JCM 10833 / BCRC 13528 / IAM 13628 / NBRC 14792 / USDA 110) protein is DNA-directed RNA polymerase subunit beta.